The chain runs to 403 residues: ATP phosphoribosyltransferase regulatory subunit (403 aa).

The protein belongs to the class-II aminoacyl-tRNA synthetase family. HisZ subfamily. As to quaternary structure, heteromultimer composed of HisG and HisZ subunits.

Its subcellular location is the cytoplasm. It participates in amino-acid biosynthesis; L-histidine biosynthesis; L-histidine from 5-phospho-alpha-D-ribose 1-diphosphate: step 1/9. Its function is as follows. Required for the first step of histidine biosynthesis. May allow the feedback regulation of ATP phosphoribosyltransferase activity by histidine. The protein is ATP phosphoribosyltransferase regulatory subunit of Nostoc punctiforme (strain ATCC 29133 / PCC 73102).